The chain runs to 486 residues: Keratin, type II cuticular Hb6 (486 aa).

The tract at residues 1 to 106 is head; sequence MTCGSYCGGR…PNAQCVKHEE (106 aa). The IF rod domain maps to 106–417; that stretch reads EKEQIKCLNS…RLLEGEEQRL (312 aa). A coil 1A region spans residues 107–141; that stretch reads KEQIKCLNSKFAAFIDKVRFLEQQNKLLETKWQFY. The interval 142–151 is linker 1; that stretch reads QNRKCCESNM. The coil 1B stretch occupies residues 152–252; sequence EPLFEGYIEA…YDEETRILHS (101 aa). Lys212 is covalently cross-linked (Glycyl lysine isopeptide (Lys-Gly) (interchain with G-Cter in SUMO1)). Residues 253-269 are linker 12; that stretch reads HISDTSIVVKMDNSRDL. The segment at 270–413 is coil 2; that stretch reads NMDCVVAEIK…TTYRRLLEGE (144 aa). Residues 414-486 form a tail region; the sequence is EQRLCEGVGS…GACSGGCKKC (73 aa).

The protein belongs to the intermediate filament family. In terms of assembly, heterotetramer of two type I and two type II keratins.

In Mus musculus (Mouse), this protein is Keratin, type II cuticular Hb6 (Krt86).